Reading from the N-terminus, the 102-residue chain is Small ribosomal subunit protein uS10 (102 aa).

Belongs to the universal ribosomal protein uS10 family. Part of the 30S ribosomal subunit.

Its function is as follows. Involved in the binding of tRNA to the ribosomes. This Bartonella tribocorum (strain CIP 105476 / IBS 506) protein is Small ribosomal subunit protein uS10.